Consider the following 422-residue polypeptide: Enolase 2 (422 aa).

Gln-162 provides a ligand contact to (2R)-2-phosphoglycerate. The active-site Proton donor is Glu-204. Residues Asp-241, Glu-285, and Asp-312 each coordinate Mg(2+). 4 residues coordinate (2R)-2-phosphoglycerate: Lys-337, Arg-366, Ser-367, and Lys-388. Lys-337 serves as the catalytic Proton acceptor.

This sequence belongs to the enolase family. Mg(2+) is required as a cofactor.

It localises to the cytoplasm. It is found in the secreted. The protein resides in the cell surface. It catalyses the reaction (2R)-2-phosphoglycerate = phosphoenolpyruvate + H2O. The protein operates within carbohydrate degradation; glycolysis; pyruvate from D-glyceraldehyde 3-phosphate: step 4/5. Catalyzes the reversible conversion of 2-phosphoglycerate (2-PG) into phosphoenolpyruvate (PEP). It is essential for the degradation of carbohydrates via glycolysis. The sequence is that of Enolase 2 from Lactococcus lactis subsp. lactis (strain IL1403) (Streptococcus lactis).